A 297-amino-acid polypeptide reads, in one-letter code: Indole-3-glycerol phosphate synthase (297 aa).

The protein belongs to the TrpC family.

The catalysed reaction is 1-(2-carboxyphenylamino)-1-deoxy-D-ribulose 5-phosphate + H(+) = (1S,2R)-1-C-(indol-3-yl)glycerol 3-phosphate + CO2 + H2O. It functions in the pathway amino-acid biosynthesis; L-tryptophan biosynthesis; L-tryptophan from chorismate: step 4/5. The protein is Indole-3-glycerol phosphate synthase of Trichodesmium erythraeum (strain IMS101).